The following is a 236-amino-acid chain: 2,3,4,5-tetrahydropyridine-2,6-dicarboxylate N-acetyltransferase (236 aa).

It belongs to the transferase hexapeptide repeat family. DapH subfamily.

It catalyses the reaction (S)-2,3,4,5-tetrahydrodipicolinate + acetyl-CoA + H2O = L-2-acetamido-6-oxoheptanedioate + CoA. It functions in the pathway amino-acid biosynthesis; L-lysine biosynthesis via DAP pathway; LL-2,6-diaminopimelate from (S)-tetrahydrodipicolinate (acetylase route): step 1/3. In terms of biological role, catalyzes the transfer of an acetyl group from acetyl-CoA to tetrahydrodipicolinate. The protein is 2,3,4,5-tetrahydropyridine-2,6-dicarboxylate N-acetyltransferase of Clostridium botulinum (strain Kyoto / Type A2).